Consider the following 177-residue polypeptide: Probable inosine/xanthosine triphosphatase (177 aa).

The protein belongs to the YjjX NTPase family. As to quaternary structure, homodimer. The cofactor is Mg(2+). Mn(2+) serves as cofactor.

The catalysed reaction is XTP + H2O = XDP + phosphate + H(+). It carries out the reaction ITP + H2O = IDP + phosphate + H(+). In terms of biological role, phosphatase that hydrolyzes non-canonical purine nucleotides such as XTP and ITP to their respective diphosphate derivatives. Probably excludes non-canonical purines from DNA/RNA precursor pool, thus preventing their incorporation into DNA/RNA and avoiding chromosomal lesions. The chain is Probable inosine/xanthosine triphosphatase from Halalkalibacterium halodurans (strain ATCC BAA-125 / DSM 18197 / FERM 7344 / JCM 9153 / C-125) (Bacillus halodurans).